Consider the following 175-residue polypeptide: Cytochrome c-550-like protein (175 aa).

An N-terminal signal peptide occupies residues 1–34; the sequence is MYQPHFWQRSIGWLCGGLLILLLGWTIAPATALA. Positions 81, 84, 85, and 135 each coordinate heme c.

This sequence belongs to the cytochrome c family. PsbV subfamily. Requires heme c as cofactor.

Its subcellular location is the cellular thylakoid membrane. In terms of biological role, probable low-potential cytochrome c, can partially replace cytochrome c-550 (PsbV) function. The sequence is that of Cytochrome c-550-like protein from Thermosynechococcus vestitus (strain NIES-2133 / IAM M-273 / BP-1).